The sequence spans 345 residues: MFHELKQSKDFLALTLAHPQYLSESFEFDLGEHTHVEVWDTGVIVFSPKQAKHSKDIVLSCAVHGNETAPIELCNALITQILSEELTLAQRVMFLIGNPAAIHNGTRFIDENLNRLFNGAHSRDEGLCNPERIRAHKLEQYVDRFYASQSGERQRIHYDLHTAIRGSKHEKFAIYPYRPGRKYSREQIMFLESCGVNTILFHHEPTTTFSYFSSENYRADAFTIELGKVFPMGQNDMTRFIAMKEMLTLLMTGKDLQLPEFDLKRLNLYQVCRSVNKHFDDFEFNFTNDVENFTAFPKGYTLAKEGGKAVKIEHEFESIVFPNAKVPVGQRTVLMLKTADDSNLD.

Zn(2+) is bound by residues histidine 64, glutamate 67, and histidine 161. The active site involves glutamate 225.

It belongs to the AspA/AstE family. Succinylglutamate desuccinylase subfamily. Zn(2+) is required as a cofactor.

The catalysed reaction is N-succinyl-L-glutamate + H2O = L-glutamate + succinate. The protein operates within amino-acid degradation; L-arginine degradation via AST pathway; L-glutamate and succinate from L-arginine: step 5/5. Functionally, transforms N(2)-succinylglutamate into succinate and glutamate. The chain is Succinylglutamate desuccinylase from Shewanella piezotolerans (strain WP3 / JCM 13877).